A 1412-amino-acid chain; its full sequence is DNA-directed RNA polymerase subunit beta' (1412 aa).

Zn(2+) is bound by residues C71, C73, C86, and C89. Residues D461, D463, and D465 each contribute to the Mg(2+) site. Zn(2+)-binding residues include C815, C889, C896, and C899.

The protein belongs to the RNA polymerase beta' chain family. In terms of assembly, the RNAP catalytic core consists of 2 alpha, 1 beta, 1 beta' and 1 omega subunit. When a sigma factor is associated with the core the holoenzyme is formed, which can initiate transcription. Mg(2+) serves as cofactor. Zn(2+) is required as a cofactor.

It catalyses the reaction RNA(n) + a ribonucleoside 5'-triphosphate = RNA(n+1) + diphosphate. Its function is as follows. DNA-dependent RNA polymerase catalyzes the transcription of DNA into RNA using the four ribonucleoside triphosphates as substrates. The chain is DNA-directed RNA polymerase subunit beta' from Actinobacillus pleuropneumoniae serotype 5b (strain L20).